A 368-amino-acid chain; its full sequence is C6 finger domain transcription factor tcpZ (368 aa).

The zn(2)-C6 fungal-type DNA-binding region spans 30–56 (CDACHASKVRCSGEPICARCQRDNVAC). The segment at 84 to 109 (FIEQRQRPAASQPPGHGTSRDSSVCA) is disordered.

Its subcellular location is the nucleus. Transcription factor that specifically regulates the thioclapurine biosynthesis gene cluster. The chain is C6 finger domain transcription factor tcpZ from Claviceps purpurea (strain 20.1) (Ergot fungus).